The sequence spans 524 residues: Phosphoenolpyruvate carboxykinase (ATP) (524 aa).

Substrate-binding residues include arginine 52, tyrosine 188, and lysine 194. ATP-binding positions include lysine 194, histidine 213, and 229-237; that span reads GLSGTGKTT. Residues lysine 194 and histidine 213 each coordinate Mn(2+). Aspartate 250 contacts Mn(2+). Positions 278, 314, and 439 each coordinate ATP. Residue arginine 314 participates in substrate binding.

It belongs to the phosphoenolpyruvate carboxykinase (ATP) family. Mn(2+) is required as a cofactor.

It localises to the cytoplasm. It catalyses the reaction oxaloacetate + ATP = phosphoenolpyruvate + ADP + CO2. It functions in the pathway carbohydrate biosynthesis; gluconeogenesis. Its function is as follows. Involved in the gluconeogenesis. Catalyzes the conversion of oxaloacetate (OAA) to phosphoenolpyruvate (PEP) through direct phosphoryl transfer between the nucleoside triphosphate and OAA. The chain is Phosphoenolpyruvate carboxykinase (ATP) from Campylobacter jejuni subsp. jejuni serotype O:2 (strain ATCC 700819 / NCTC 11168).